A 236-amino-acid polypeptide reads, in one-letter code: Movement and silencing protein TGBp1 (236 aa).

A (+)RNA virus helicase ATP-binding domain is found at 1 to 117 (MDHIHHLLSS…DNLFEPHYTL (117 aa)). The (+)RNA virus helicase C-terminal domain occupies 118–236 (EITYRFGPNT…LGPDAFDSSP (119 aa)).

It belongs to the Tymovirales TGBp1 protein family. Homodimer and homooligomer. Interacts with capsid protein. Interacts with host AGO1; this interaction targets the host protein for degradation, thereby suppressing the antiviral RNA silencing.

Its subcellular location is the host cytoplasm. Functionally, transports viral genome to neighboring plant cells directly through plasmosdesmata, without any budding. The movement protein allows efficient cell to cell propagation, by bypassing the host cell wall barrier. Increases plasmodesma size exclusion limit. Acts as a suppressor of RNA-mediated gene silencing, also known as post-transcriptional gene silencing (PTGS), a mechanism of plant viral defense that limits the accumulation of viral RNAs. This chain is Movement and silencing protein TGBp1, found in White clover mosaic virus (strain O) (WCMV).